The primary structure comprises 150 residues: uncharacterized protein (150 aa).

Positions 49–88 (KEWAENASTDEIDDFLTHDDETERDADPSSGSGPELMNKA) are disordered. A compositionally biased stretch (basic and acidic residues) spans 63–75 (FLTHDDETERDAD).

This is an uncharacterized protein from Bacillus subtilis (strain 168).